The chain runs to 658 residues: Carnitine O-palmitoyltransferase 2, mitochondrial (658 aa).

Residues 1–25 (MVARLLLRSWSRGLAVGPGAPCRPL) constitute a mitochondrion transit peptide. At 26–178 (STGFEPSQYL…DLLEPEVFHL (153 aa)) the chain is on the mitochondrial matrix side. The residue at position 69 (K69) is an N6-succinyllysine. The residue at position 79 (K79) is an N6-acetyllysine. Residue K85 is modified to N6-succinyllysine. Residues 179–208 (NPAKSDTDTFKRFIRFVPSFLSWYGAYLVN) constitute an intramembrane region (note=Mitochondrial inner membrane). At 209-658 (AYPLDMSQYY…DALEGKMIKT (450 aa)) the chain is on the mitochondrial matrix side. K239 is modified (N6-acetyllysine; alternate). At K239 the chain carries N6-succinyllysine; alternate. The Proton acceptor role is filled by H372. An N6-acetyllysine; alternate modification is found at K418. An N6-succinyllysine; alternate modification is found at K418. K424 and K439 each carry N6-succinyllysine. 452 to 464 (GREFLKKQKLSPD) is a CoA binding site. 3 residues coordinate (R)-carnitine: Y486, S488, and T499. K510 carries the N6-acetyllysine; alternate modification. The residue at position 510 (K510) is an N6-succinyllysine; alternate.

The protein belongs to the carnitine/choline acetyltransferase family.

The protein localises to the mitochondrion inner membrane. It carries out the reaction (R)-carnitine + hexadecanoyl-CoA = O-hexadecanoyl-(R)-carnitine + CoA. The enzyme catalyses octanoyl-CoA + (R)-carnitine = O-octanoyl-(R)-carnitine + CoA. It catalyses the reaction decanoyl-CoA + (R)-carnitine = O-decanoyl-(R)-carnitine + CoA. The catalysed reaction is dodecanoyl-CoA + (R)-carnitine = O-dodecanoyl-R-carnitine + CoA. It carries out the reaction tetradecanoyl-CoA + (R)-carnitine = O-tetradecanoyl-(R)-carnitine + CoA. The enzyme catalyses (R)-carnitine + octadecanoyl-CoA = O-octadecanoyl-(R)-carnitine + CoA. It catalyses the reaction eicosanoyl-CoA + (R)-carnitine = O-eicosanoyl-(R)-carnitine + CoA. The catalysed reaction is (9Z)-tetradecenoyl-CoA + (R)-carnitine = O-(9Z)-tetradecenoyl-(R)-carnitine + CoA. It carries out the reaction (5Z)-tetradecenoyl-CoA + (R)-carnitine = O-(5Z)-tetradecenoyl-(R)-carnitine + CoA. The enzyme catalyses (R)-carnitine + (9Z)-octadecenoyl-CoA = O-(9Z)-octadecenoyl-(R)-carnitine + CoA. It catalyses the reaction 4,8-dimethylnonanoyl-CoA + (R)-carnitine = O-4,8-dimethylnonanoyl-(R)-carnitine + CoA. Its pathway is lipid metabolism; fatty acid beta-oxidation. Its function is as follows. Involved in the intramitochondrial synthesis of acylcarnitines from accumulated acyl-CoA metabolites. Reconverts acylcarnitines back into the respective acyl-CoA esters that can then undergo beta-oxidation, an essential step for the mitochondrial uptake of long-chain fatty acids and their subsequent beta-oxidation in the mitochondrion. Active with medium (C8-C12) and long-chain (C14-C18) acyl-CoA esters. In Bos taurus (Bovine), this protein is Carnitine O-palmitoyltransferase 2, mitochondrial (CPT2).